Consider the following 53-residue polypeptide: Sec-independent protein translocase protein TatA (53 aa).

Residues 1–21 (MGMSLSHLLIVLLIIFVLFGA) traverse the membrane as a helical segment.

The protein belongs to the TatA/E family. In terms of assembly, the Tat system comprises two distinct complexes: a TatABC complex, containing multiple copies of TatA, TatB and TatC subunits, and a separate TatA complex, containing only TatA subunits. Substrates initially bind to the TatABC complex, which probably triggers association of the separate TatA complex to form the active translocon.

The protein resides in the cell inner membrane. Part of the twin-arginine translocation (Tat) system that transports large folded proteins containing a characteristic twin-arginine motif in their signal peptide across membranes. TatA could form the protein-conducting channel of the Tat system. In Rickettsia conorii (strain ATCC VR-613 / Malish 7), this protein is Sec-independent protein translocase protein TatA.